The chain runs to 349 residues: Isopentenyl-diphosphate delta-isomerase (349 aa).

6–7 contributes to the substrate binding site; sequence RK. Residues 62–64, serine 93, and asparagine 122 each bind FMN; that span reads AMT. Glutamine 152 contacts substrate. Mg(2+) is bound at residue glutamate 153. FMN contacts are provided by residues lysine 184, threonine 214, 258–259, and 280–281; these read GG and AG.

This sequence belongs to the IPP isomerase type 2 family. As to quaternary structure, homooctamer. Dimer of tetramers. FMN is required as a cofactor. The cofactor is NADPH. It depends on Mg(2+) as a cofactor.

The protein localises to the cytoplasm. It carries out the reaction isopentenyl diphosphate = dimethylallyl diphosphate. Functionally, involved in the biosynthesis of isoprenoids. Catalyzes the 1,3-allylic rearrangement of the homoallylic substrate isopentenyl (IPP) to its allylic isomer, dimethylallyl diphosphate (DMAPP). This Bacillus cytotoxicus (strain DSM 22905 / CIP 110041 / 391-98 / NVH 391-98) protein is Isopentenyl-diphosphate delta-isomerase.